Here is a 192-residue protein sequence, read N- to C-terminus: Leucine-rich repeat-containing protein 51 (192 aa).

3 LRR repeats span residues 49-71 (SLTQ…NQVV), 80-101 (NLAW…LTTF), and 103-124 (NLSV…NKLA). Residues 137–175 (NPIEEEKGYRQYVLCNLPRITTFDFSGVTRADRSTAEVW) form the LRRCT domain.

Widely expressed in adult and embryonic tissues. Expressed in the developing choroid plexus from 12.5 dpc and in the epithelium of the developing airway tract from 14.5 dpc. Also expressed in the postnatal inner ear.

It localises to the cytoplasm. The chain is Leucine-rich repeat-containing protein 51 from Mus musculus (Mouse).